A 155-amino-acid polypeptide reads, in one-letter code: Endoribonuclease YbeY (155 aa).

3 residues coordinate Zn(2+): His-117, His-121, and His-127.

Belongs to the endoribonuclease YbeY family. It depends on Zn(2+) as a cofactor.

It localises to the cytoplasm. Functionally, single strand-specific metallo-endoribonuclease involved in late-stage 70S ribosome quality control and in maturation of the 3' terminus of the 16S rRNA. This is Endoribonuclease YbeY from Treponema denticola (strain ATCC 35405 / DSM 14222 / CIP 103919 / JCM 8153 / KCTC 15104).